Here is a 209-residue protein sequence, read N- to C-terminus: Large ribosomal subunit protein uL3 (209 aa).

Residues 133–152 (THGNSLSHRVPGSIGQNQTP) form a disordered region. Glutamine 150 bears the N5-methylglutamine mark.

It belongs to the universal ribosomal protein uL3 family. As to quaternary structure, part of the 50S ribosomal subunit. Forms a cluster with proteins L14 and L19. In terms of processing, methylated by PrmB.

One of the primary rRNA binding proteins, it binds directly near the 3'-end of the 23S rRNA, where it nucleates assembly of the 50S subunit. The chain is Large ribosomal subunit protein uL3 from Sodalis glossinidius (strain morsitans).